We begin with the raw amino-acid sequence, 435 residues long: UPF0053 protein Rv2366c (435 aa).

Residues 1-185 form the CNNM transmembrane domain; sequence MTGYYQLLGS…QQRGVVAADE (185 aa). Transmembrane regions (helical) follow at residues 7–27 and 89–109; these read LLGSIVLIGLGGLFAAIDAAI and VWGLYLAAGIMVLASFVVVGV. CBS domains are found at residues 204–267 and 272–329; these read MVPR…GRET and VMRP…IADE.

This sequence belongs to the UPF0053 family.

It localises to the cell membrane. This chain is UPF0053 protein Rv2366c, found in Mycobacterium tuberculosis (strain ATCC 25618 / H37Rv).